Reading from the N-terminus, the 503-residue chain is ATP synthase subunit alpha (503 aa).

Residue Gly-169–Thr-176 participates in ATP binding.

This sequence belongs to the ATPase alpha/beta chains family. In terms of assembly, F-type ATPases have 2 components, CF(1) - the catalytic core - and CF(0) - the membrane proton channel. CF(1) has five subunits: alpha(3), beta(3), gamma(1), delta(1), epsilon(1). CF(0) has three main subunits: a(1), b(2) and c(9-12). The alpha and beta chains form an alternating ring which encloses part of the gamma chain. CF(1) is attached to CF(0) by a central stalk formed by the gamma and epsilon chains, while a peripheral stalk is formed by the delta and b chains.

Its subcellular location is the cell inner membrane. It carries out the reaction ATP + H2O + 4 H(+)(in) = ADP + phosphate + 5 H(+)(out). Produces ATP from ADP in the presence of a proton gradient across the membrane. The alpha chain is a regulatory subunit. This Leptospira borgpetersenii serovar Hardjo-bovis (strain L550) protein is ATP synthase subunit alpha.